The following is a 512-amino-acid chain: MEKLKSELWMTAVATCMSLLLYLTILRRRHASGGRSLALPPGPTPLPLIGNLLCLGGIFHQTLAKLARVHGPVMTLKLGLTTAVVVSSAEAAREAYTKHDQRLAARPVPDAFRANGFSERSIVFSPSSDPQWKNLRGIHATHIFSPRALAALRGIRERKVRDIVGYIRTVAGEEMCVREVVHNGVLNLISTSFFSMDMADVRSESARGLRGLIEDIIATVAGPNVSDFFPFLRQLDLQGLRRQTGSHLGIVFGLLDDIIDRRMAETRDHPDKQRHGDFLDALISLASAGKIPRYHITYLLFDVFAAGADTMTTTVEWAMAELLRNPRVMAKVRAEVTDALGGRESFDEGDAASLTYLQCVFKEAMRLHPVGSILVPHLAVQDGVEIGGYAVPKGTTVIFNAWAIMRDPAAWESPDQFLPERFLHKEESSSPPLELRGKDYEYIPFGSGRRLCPGLPLAERAVPFILASLLHAFEWRLPDGMSPDDMDMTEKFATANVLATPLKAVPVASHTS.

The helical transmembrane segment at 6 to 26 threads the bilayer; sequence SELWMTAVATCMSLLLYLTIL. A heme-binding site is contributed by C452.

The protein belongs to the cytochrome P450 family. Heme serves as cofactor.

Its subcellular location is the membrane. The enzyme catalyses ent-sandaracopimaradien-3beta-ol + reduced [NADPH--hemoprotein reductase] + O2 = oryzalexin E + oxidized [NADPH--hemoprotein reductase] + H2O + H(+). Functionally, enzyme of the diterpenoid metabolism involved in the biosynthesis of the oryzalexin class of phytoalexins. Can use ent-sandaracopimaradien and syn-stemodene as substrates, but no activity with syn-stemoden-19-oic acid. Hydroxylates 3-alpha-hydroxy-ent-sandaracopimaradiene at C-9-beta, resulting in a 3-alpha,9-beta-diol corresponding to oryzalexins E. In Oryza sativa subsp. japonica (Rice), this protein is Oryzalexin E synthase.